Here is a 337-residue protein sequence, read N- to C-terminus: Ribosomal RNA small subunit methyltransferase H (337 aa).

Residues 45–47 (GGH), Asp64, Phe91, Asp120, and Gln127 contribute to the S-adenosyl-L-methionine site.

This sequence belongs to the methyltransferase superfamily. RsmH family.

Its subcellular location is the cytoplasm. The enzyme catalyses cytidine(1402) in 16S rRNA + S-adenosyl-L-methionine = N(4)-methylcytidine(1402) in 16S rRNA + S-adenosyl-L-homocysteine + H(+). In terms of biological role, specifically methylates the N4 position of cytidine in position 1402 (C1402) of 16S rRNA. The chain is Ribosomal RNA small subunit methyltransferase H from Corynebacterium glutamicum (strain ATCC 13032 / DSM 20300 / JCM 1318 / BCRC 11384 / CCUG 27702 / LMG 3730 / NBRC 12168 / NCIMB 10025 / NRRL B-2784 / 534).